The sequence spans 198 residues: Ribonuclease HII (198 aa).

The region spanning 1–198 is the RNase H type-2 domain; sequence MLCGIDEAGR…QRRSFFVKNL (198 aa). D6, E7, and D112 together coordinate a divalent metal cation.

The protein belongs to the RNase HII family. The cofactor is Mn(2+). Mg(2+) is required as a cofactor.

The protein localises to the cytoplasm. It carries out the reaction Endonucleolytic cleavage to 5'-phosphomonoester.. Its function is as follows. Endonuclease that specifically degrades the RNA of RNA-DNA hybrids. The chain is Ribonuclease HII from Treponema denticola (strain ATCC 35405 / DSM 14222 / CIP 103919 / JCM 8153 / KCTC 15104).